The chain runs to 358 residues: C-X-C chemokine receptor type 4 (358 aa).

The tract at residues 1-25 (MDGFSGGIDINIFDSNSTENGSGDF) is important for chemokine binding and signaling. Residues 1 to 44 (MDGFSGGIDINIFDSNSTENGSGDFEDFSEPCFMHDNSDFNRIF) lie on the Extracellular side of the membrane. N-linked (GlcNAc...) asparagine glycosylation is found at N16 and N20. 2 disulfide bridges follow: C32–C281 and C113–C190. Residues 45-67 (LPTIYSFIFLLGIIGNGLVVVVM) traverse the membrane as a helical segment. The Cytoplasmic portion of the chain corresponds to 68–81 (GYQKKSRTMTDKYR). The helical transmembrane segment at 82 to 103 (LHLSVADLLFVFTLPFWSVDAA) threads the bilayer. The interval 98-101 (WSVD) is chemokine binding. Over 104-114 (IGWYFKEFLCK) the chain is Extracellular. Residues 115–134 (AVHVIYTVNLYSSVLILAFI) traverse the membrane as a helical segment. The chemokine binding stretch occupies residues 117–121 (HVIYT). The Cytoplasmic segment spans residues 135–158 (SLDRYLAIVHATNSQGSRKMLADK). The segment at 139–151 (YLAIVHATNSQGS) is involved in dimerization; when bound to chemokine. Residues 159–178 (VVYAGVWLPALLLTVPDLVF) traverse the membrane as a helical segment. At 179–202 (ARVSDENGQFVCDRIYPIDNRETW) the chain is on the extracellular side. Residues 190 to 194 (CDRIY) are chemokine binding, important for signaling. The chain crosses the membrane as a helical span at residues 203–223 (TVGFRFLHITVGLILPGLIIL). Residues 224–248 (ICYCVIISKLSHSKGHQKRKALKTT) are Cytoplasmic-facing. A helical membrane pass occupies residues 249 to 268 (VILILAFFACWLPYYVCLTT). The Extracellular portion of the chain corresponds to 269 to 289 (DTFMLLGLLKADCIWENTLHK). A helical membrane pass occupies residues 290–309 (AISITEALAFFHCCLNPILY). The Cytoplasmic segment spans residues 310–358 (AFLGAKFKTSAQNAFTSVSRGSSLKILSKKRAGLSSVSTESESSSFHSS). The tract at residues 338 to 358 (KKRAGLSSVSTESESSSFHSS) is disordered. Over residues 344-358 (SSVSTESESSSFHSS) the composition is skewed to low complexity.

The protein belongs to the G-protein coupled receptor 1 family. As to quaternary structure, monomer. Can form dimers. In terms of processing, sulfation is required for efficient binding of cxcl12/sdf-1alpha and promotes its dimerization. Post-translationally, O- and N-glycosylated.

It localises to the cell membrane. The protein resides in the cytoplasm. Its subcellular location is the nucleus. It is found in the early endosome. The protein localises to the late endosome. It localises to the lysosome. Functionally, receptor for the C-X-C chemokine cxcl12/sdf-1. Transduces a signal by increasing the intracellular calcium ion level. Signaling with cxcl12/sdf-1 mediates the directional movement of mesodermal cells during gastrulation. May play a role in the migration of embryonic presumptive primordial germ cells (pPGCs). May also be involved in regulating migration of hematopoietic stem cells into the larval liver. The polypeptide is C-X-C chemokine receptor type 4 (Xenopus tropicalis (Western clawed frog)).